Consider the following 118-residue polypeptide: Aspartate 1-decarboxylase (118 aa).

Residue Ser25 is the Schiff-base intermediate with substrate; via pyruvic acid of the active site. Ser25 is modified (pyruvic acid (Ser)). Thr57 contributes to the substrate binding site. Residue Tyr58 is the Proton donor of the active site. A substrate-binding site is contributed by 73 to 75 (GAA).

It belongs to the PanD family. As to quaternary structure, heterooctamer of four alpha and four beta subunits. Pyruvate is required as a cofactor. In terms of processing, is synthesized initially as an inactive proenzyme, which is activated by self-cleavage at a specific serine bond to produce a beta-subunit with a hydroxyl group at its C-terminus and an alpha-subunit with a pyruvoyl group at its N-terminus.

It is found in the cytoplasm. The catalysed reaction is L-aspartate + H(+) = beta-alanine + CO2. Its pathway is cofactor biosynthesis; (R)-pantothenate biosynthesis; beta-alanine from L-aspartate: step 1/1. In terms of biological role, catalyzes the pyruvoyl-dependent decarboxylation of aspartate to produce beta-alanine. The chain is Aspartate 1-decarboxylase from Leptospira biflexa serovar Patoc (strain Patoc 1 / Ames).